Reading from the N-terminus, the 454-residue chain is Cysteine--tRNA ligase (454 aa).

C27 lines the Zn(2+) pocket. The short motif at 29 to 39 is the 'HIGH' region element; that stretch reads PTVQDHFHIGH. Residues D207, H232, and E236 each contribute to the Zn(2+) site. A 'KMSKS' region motif is present at residues 265–269; the sequence is KMSKS. K268 lines the ATP pocket.

The protein belongs to the class-I aminoacyl-tRNA synthetase family. Zn(2+) serves as cofactor.

It is found in the cytoplasm. The enzyme catalyses tRNA(Cys) + L-cysteine + ATP = L-cysteinyl-tRNA(Cys) + AMP + diphosphate. The chain is Cysteine--tRNA ligase from Thermoplasma volcanium (strain ATCC 51530 / DSM 4299 / JCM 9571 / NBRC 15438 / GSS1).